The chain runs to 88 residues: Apolipoprotein C-I (88 aa).

The first 26 residues, 1 to 26 (MRLILSLPVLAVVLAMVLEGPAPAQA), serve as a signal peptide directing secretion.

It belongs to the apolipoprotein C1 family.

It is found in the secreted. In terms of biological role, inhibitor of lipoprotein binding to the low density lipoprotein (LDL) receptor, LDL receptor-related protein, and very low density lipoprotein (VLDL) receptor. Associates with high density lipoproteins (HDL) and the triacylglycerol-rich lipoproteins in the plasma and makes up about 10% of the protein of the VLDL and 2% of that of HDL. Appears to interfere directly with fatty acid uptake and is also the major plasma inhibitor of cholesteryl ester transfer protein (CETP). Binds free fatty acids and reduces their intracellular esterification. Modulates the interaction of APOE with beta-migrating VLDL and inhibits binding of beta-VLDL to the LDL receptor-related protein. This is Apolipoprotein C-I (APOC1) from Cynopterus brachyotis (Lesser short-nosed fruit bat).